Reading from the N-terminus, the 758-residue chain is Vitamin K-dependent gamma-carboxylase (758 aa).

The disordered stretch occupies residues 1–29 (MAVHRGSARAAPASDKVQKNKPAQTSGLE). A2 is modified (N-acetylalanine). Topologically, residues 2–60 (AVHRGSARAAPASDKVQKNKPAQTSGLEQGSRMARIFGFEWADLSSWQSVVTLLNRPTD) are cytoplasmic. Residues 61 to 81 (PANLAVFRFLFAFLMLLDIPQ) form a helical membrane-spanning segment. The Lumenal portion of the chain corresponds to 82–113 (ERGLSSLDRKYLDGLDVCRFPLLDALRPLPLD). The cysteines at positions 99 and 450 are disulfide-linked. A helical membrane pass occupies residues 114–134 (WMYLVYTIMFLGALGMMLGLW). At 135 to 136 (YR) the chain is on the cytoplasmic side. Residues 137-157 (LSCMLFLLPYWYVFLLDKTSW) form a helical membrane-spanning segment. Topologically, residues 158-292 (NNHSYLYGLL…VSYFHCMNSQ (135 aa)) are lumenal. The chain crosses the membrane as a helical span at residues 293-313 (LFSIGMFPYVMLASSPLFCSA). Residues 314 to 361 (EWPRKLVARCPKRLQELLPAKAAPRPSASCVYKRARAKAGQKPGLRHH) lie on the Cytoplasmic side of the membrane. A helical membrane pass occupies residues 362 to 382 (LGTVFTLLYLLEQLFLPYSHF). Topologically, residues 383–758 (LTQGYNNWTN…PDSEHVHSEL (376 aa)) are lumenal. The interval 727–758 (PFEPVDESSASNTDSSDPHPSEPDSEHVHSEL) is disordered. The segment covering 742 to 758 (SDPHPSEPDSEHVHSEL) has biased composition (basic and acidic residues).

It belongs to the vitamin K-dependent gamma-carboxylase family. In terms of assembly, monomer. Interacts with CALU.

Its subcellular location is the endoplasmic reticulum membrane. It carries out the reaction 4-carboxy-L-glutamyl-[protein] + 2,3-epoxyphylloquinone + H2O + H(+) = phylloquinol + L-glutamyl-[protein] + CO2 + O2. Functionally, mediates the vitamin K-dependent carboxylation of glutamate residues to calcium-binding gamma-carboxyglutamate (Gla) residues with the concomitant conversion of the reduced hydroquinone form of vitamin K to vitamin K epoxide. Catalyzes gamma-carboxylation of various proteins, such as blood coagulation factors (F2, F7, F9 and F10), osteocalcin (BGLAP) or matrix Gla protein (MGP). This is Vitamin K-dependent gamma-carboxylase (Ggcx) from Rattus norvegicus (Rat).